The following is a 138-amino-acid chain: ATP synthase epsilon chain (138 aa).

The protein belongs to the ATPase epsilon chain family. F-type ATPases have 2 components, CF(1) - the catalytic core - and CF(0) - the membrane proton channel. CF(1) has five subunits: alpha(3), beta(3), gamma(1), delta(1), epsilon(1). CF(0) has three main subunits: a, b and c.

The protein resides in the cell inner membrane. Functionally, produces ATP from ADP in the presence of a proton gradient across the membrane. In Geotalea daltonii (strain DSM 22248 / JCM 15807 / FRC-32) (Geobacter daltonii), this protein is ATP synthase epsilon chain.